The sequence spans 481 residues: Glycogen synthase (481 aa).

Residue K15 coordinates ADP-alpha-D-glucose.

This sequence belongs to the glycosyltransferase 1 family. Bacterial/plant glycogen synthase subfamily.

The enzyme catalyses [(1-&gt;4)-alpha-D-glucosyl](n) + ADP-alpha-D-glucose = [(1-&gt;4)-alpha-D-glucosyl](n+1) + ADP + H(+). The protein operates within glycan biosynthesis; glycogen biosynthesis. Synthesizes alpha-1,4-glucan chains using ADP-glucose. This chain is Glycogen synthase, found in Thermosipho melanesiensis (strain DSM 12029 / CIP 104789 / BI429).